The following is a 492-amino-acid chain: 1-aminocyclopropane-1-carboxylate synthase 1 (492 aa).

The residue at position 277 (Lys-277) is an N6-(pyridoxal phosphate)lysine.

It belongs to the class-I pyridoxal-phosphate-dependent aminotransferase family. In terms of assembly, homodimer. Pyridoxal 5'-phosphate serves as cofactor.

It carries out the reaction S-adenosyl-L-methionine = 1-aminocyclopropane-1-carboxylate + S-methyl-5'-thioadenosine + H(+). Its pathway is alkene biosynthesis; ethylene biosynthesis via S-adenosyl-L-methionine; ethylene from S-adenosyl-L-methionine: step 1/2. Its function is as follows. Catalyzes the formation of 1-aminocyclopropane-1-carboxylate, a direct precursor of ethylene in higher plants. The protein is 1-aminocyclopropane-1-carboxylate synthase 1 (ACS1) of Prunus mume (Japanese apricot).